We begin with the raw amino-acid sequence, 587 residues long: Laccase abr2 (587 aa).

The first 17 residues, 1–17 (MWYQSASLLGVAAVAQA), serve as a signal peptide directing secretion. 2 consecutive Plastocyanin-like domains span residues 41 to 137 (IFVN…VHIR) and 168 to 350 (LVML…ANDG). N-linked (GlcNAc...) asparagine glycosylation is present at Asn71. Cu cation-binding residues include His75, His77, His119, and His121. 4 N-linked (GlcNAc...) asparagine glycosylation sites follow: Asn228, Asn383, Asn420, and Asn462. One can recognise a Plastocyanin-like 3 domain in the interval 397–577 (PPYPAISPAS…ILMDGVDVWP (181 aa)). Position 487 (His487) interacts with Cu cation. An N-linked (GlcNAc...) asparagine glycan is attached at Asn504.

It belongs to the multicopper oxidase family.

It localises to the cell surface. The protein operates within pigment biosynthesis; melanin biosynthesis. Its function is as follows. Laccase; part of the gene cluster that mediates the biosynthesis of dihydroxynaphthalene (DHN)-melanin, a bluish-green pigment and a structural component of the conidial wall. The first step of the pathway is the production of the heptaketide naphtopyrone YWA1 by the polyketide synthase alb1 though condensation of acetyl-CoA with malonyl-CoA. The naphtopyrone YWA1 is then converted to the pentaketide 1,3,6,8-tetrahydroxynaphthalene (1,3,6,8-THN) by the heptaketide hydrolyase ayg1 though chain-length shortening. 1,3,6,8-THN is substrate of the hydroxynaphthalene reductase arp2 to yield scytalone. The scytalone dehydratase arp1 then reduces scytalone to 1,3,8-THN. 1,3,8-THN is also substrate of the hydroxynaphthalene reductase arp2 to yield vermelone. Vermelone is further converted by the multicopper oxidase abr1 to 1,8-DHN. Finally the laccase abr2 transforms 1,8-DHN to DHN-melanin. DHN-melanin biosynthesis appears to be initiated in endosomes where early enzymes (abl1, ayg1, arp1 and arp2) localize, with exocytosis leading to melanin deposition on the cell surface where late enzymes (abr1 and abr2) localize. DHN-melanin is an important structural component of the outer cell wall and is required for the presence of conidial surface hydrophobins. DHN-melanin also plays a crucial role in fungal virulence, including a protective role against the host's immune defenses. DHN-melanin also protects conidia against amoeba predation. This Aspergillus fumigatus (strain ATCC MYA-4609 / CBS 101355 / FGSC A1100 / Af293) (Neosartorya fumigata) protein is Laccase abr2.